The chain runs to 62 residues: Weak neurotoxin 5 (62 aa).

Disulfide bonds link Cys3–Cys24, Cys6–Cys11, Cys17–Cys40, Cys44–Cys54, and Cys55–Cys60.

Belongs to the three-finger toxin family. Ancestral subfamily. Orphan group II sub-subfamily. In terms of tissue distribution, expressed by the venom gland.

It localises to the secreted. In terms of biological role, binds with low affinity to muscular (alpha-1-beta-1-delta-epsilon/CHRNA1-CHRNB1-CHRND-CHRNE) and very low affinity to neuronal (alpha-7/CHRNA7) nicotinic acetylcholine receptor (nAChR). This is Weak neurotoxin 5 from Naja naja (Indian cobra).